Reading from the N-terminus, the 264-residue chain is Large ribosomal subunit protein mL50 (264 aa).

The N-terminal 75 residues, 1-75, are a transit peptide targeting the mitochondrion; the sequence is MSSLLKLHCI…EEGTNEASSQ (75 aa).

The protein belongs to the mitochondrion-specific ribosomal protein mL50 family. Component of the mitochondrial large ribosomal subunit (mt-LSU). Mature yeast 74S mitochondrial ribosomes consist of a small (37S) and a large (54S) subunit. The 37S small subunit contains a 15S ribosomal RNA (15S mt-rRNA) and 34 different proteins. The 54S large subunit contains a 21S rRNA (21S mt-rRNA) and 46 different proteins.

It is found in the mitochondrion. In terms of biological role, component of the mitochondrial ribosome (mitoribosome), a dedicated translation machinery responsible for the synthesis of mitochondrial genome-encoded proteins, including at least some of the essential transmembrane subunits of the mitochondrial respiratory chain. The mitoribosomes are attached to the mitochondrial inner membrane and translation products are cotranslationally integrated into the membrane. This is Large ribosomal subunit protein mL50 (MRPL13) from Saccharomyces cerevisiae (strain ATCC 204508 / S288c) (Baker's yeast).